The chain runs to 562 residues: Putative transport protein ETA_21820 (562 aa).

5 consecutive transmembrane segments (helical) span residues 8–28, 32–52, 66–86, 94–114, and 158–178; these read LLIGNHILLLFVVLALGLCLG, LGSVQLGNSIGVLVVSLLLGQ, FMLFIFCVGVEAGPNFFSIFF, MLAIVMVSSAMVLALGLGKLF, and HLSLGYALTYLVGLVSLIFGA. RCK C-terminal domains follow at residues 202–288 and 290–373; these read LDPD…SFRN and KEVF…RIGF. The next 6 helical transmembrane spans lie at 383–403, 406–426, 440–460, 473–493, 503–523, and 540–560; these read LLAFCAFFILGLMIGMITFQF, FNFGIGNAAGLLFAGIMLGFL, ALTMVKEFGLMVFMAGVGLSA, LLMLGAGLIVSLVPVVICFLF, ALLFGAIMGARTCAPAMEIIS, and AIANVLLTLAGTLIVIIWPIL.

This sequence belongs to the AAE transporter (TC 2.A.81) family. YbjL subfamily.

The protein resides in the cell membrane. The sequence is that of Putative transport protein ETA_21820 from Erwinia tasmaniensis (strain DSM 17950 / CFBP 7177 / CIP 109463 / NCPPB 4357 / Et1/99).